The primary structure comprises 333 residues: Fructose-1,6-bisphosphatase class 1 (333 aa).

Positions 92, 113, 115, and 116 each coordinate Mg(2+). Substrate contacts are provided by residues 116 to 119, Asn-209, Tyr-242, and Lys-272; that span reads DGSS. Glu-278 is a binding site for Mg(2+).

This sequence belongs to the FBPase class 1 family. In terms of assembly, homotetramer. Requires Mg(2+) as cofactor.

Its subcellular location is the cytoplasm. It carries out the reaction beta-D-fructose 1,6-bisphosphate + H2O = beta-D-fructose 6-phosphate + phosphate. The protein operates within carbohydrate biosynthesis; Calvin cycle. The chain is Fructose-1,6-bisphosphatase class 1 from Pelodictyon phaeoclathratiforme (strain DSM 5477 / BU-1).